Reading from the N-terminus, the 99-residue chain is DNA-directed RNA polymerase subunit omega (99 aa).

The protein belongs to the RNA polymerase subunit omega family. As to quaternary structure, the RNAP catalytic core consists of 2 alpha, 1 beta, 1 beta' and 1 omega subunit. When a sigma factor is associated with the core the holoenzyme is formed, which can initiate transcription.

The enzyme catalyses RNA(n) + a ribonucleoside 5'-triphosphate = RNA(n+1) + diphosphate. In terms of biological role, promotes RNA polymerase assembly. Latches the N- and C-terminal regions of the beta' subunit thereby facilitating its interaction with the beta and alpha subunits. This Deinococcus geothermalis (strain DSM 11300 / CIP 105573 / AG-3a) protein is DNA-directed RNA polymerase subunit omega.